Consider the following 541-residue polypeptide: Acyl-CoA ligase M9 (541 aa).

186–197 (AMSTSGTTGLPK) provides a ligand contact to AMP. Positions 445-519 (ELEAVLHQMP…DSLPRNSSGK (75 aa)) are AMP-binding.

It belongs to the ATP-dependent AMP-binding enzyme family.

The protein operates within secondary metabolite biosynthesis. In terms of biological role, acyl-CoA ligase; part of the gene cluster that mediates the biosynthesis of squalestatin S1 (SQS1, also known as zaragozic acid A), a heavily oxidized fungal polyketide that offers potent cholesterol lowering activity by targeting squalene synthase (SS). SQS1 is composed of a 2,8-dioxobicyclic[3.2.1]octane-3,4,5-tricarboxyclic acid core that is connected to two lipophilic polyketide arms. These initial steps feature the priming of an unusual benzoic acid starter unit onto the highly reducing polyketide synthase pks2, followed by oxaloacetate extension and product release to generate a tricarboxylic acid containing product. The phenylalanine ammonia lyase (PAL) M7 and the acyl-CoA ligase M9 are involved in transforming phenylalanine into benzoyl-CoA. The citrate synthase-like protein R3 is involved in connecting the C-alpha-carbons of the hexaketide chain and oxaloacetate to afford the tricarboxylic acid unit. The potential hydrolytic enzymes, M8 and M10, are in close proximity to pks2 and may participate in product release. On the other side, the tetraketide arm is synthesized by a the squalestatin tetraketide synthase pks1 and enzymatically esterified to the core in the last biosynthetic step, by the acetyltransferase M4. The biosynthesis of the tetraketide must involve 3 rounds of chain extension. After the first and second rounds methyl-transfer occurs, and in all rounds of extension the ketoreductase and dehydratase are active. The enoyl reductase and C-MeT of pks1 are not active in the final round of extension. The acetyltransferase M4 appears to have a broad substrate selectivity for its acyl CoA substrate, allowing the in vitro synthesis of novel squalestatins. The biosynthesis of SQS1 requires several oxidative steps likely performed by oxidoreductases M1, R1 and R2. Finally, in support of the identification of the cluster as being responsible for SQS1 production, the cluster contains a gene encoding a putative squalene synthase (SS) R6, suggesting a likely mechanism for self-resistance. This is Acyl-CoA ligase M9 from Phoma sp. (strain ATCC 20986 / MF5453).